Here is a 196-residue protein sequence, read N- to C-terminus: Holliday junction branch migration complex subunit RuvA (196 aa).

Residues 1 to 61 form a domain I region; the sequence is MYEYFEGIVT…DTGITLYGFQ (61 aa). Residues 62 to 140 form a domain II region; it reads SEDDKGLFLK…DYVARLDRQD (79 aa). The interval 141–149 is flexible linker; sequence EEQGNISPA. The segment at 149-196 is domain III; that stretch reads ALNDALLALIALGYTQKEVDRITTKLEEVNADTADQYIKKGLALLLKK.

The protein belongs to the RuvA family. As to quaternary structure, homotetramer. Forms an RuvA(8)-RuvB(12)-Holliday junction (HJ) complex. HJ DNA is sandwiched between 2 RuvA tetramers; dsDNA enters through RuvA and exits via RuvB. An RuvB hexamer assembles on each DNA strand where it exits the tetramer. Each RuvB hexamer is contacted by two RuvA subunits (via domain III) on 2 adjacent RuvB subunits; this complex drives branch migration. In the full resolvosome a probable DNA-RuvA(4)-RuvB(12)-RuvC(2) complex forms which resolves the HJ.

It is found in the cytoplasm. Its function is as follows. The RuvA-RuvB-RuvC complex processes Holliday junction (HJ) DNA during genetic recombination and DNA repair, while the RuvA-RuvB complex plays an important role in the rescue of blocked DNA replication forks via replication fork reversal (RFR). RuvA specifically binds to HJ cruciform DNA, conferring on it an open structure. The RuvB hexamer acts as an ATP-dependent pump, pulling dsDNA into and through the RuvAB complex. HJ branch migration allows RuvC to scan DNA until it finds its consensus sequence, where it cleaves and resolves the cruciform DNA. This is Holliday junction branch migration complex subunit RuvA from Lactobacillus helveticus (strain DPC 4571).